A 137-amino-acid chain; its full sequence is Cytochrome b5 (137 aa).

A Cytochrome b5 heme-binding domain is found at lysine 6–aspartate 82. Positions 41 and 65 each coordinate heme. The helical transmembrane segment at phenylalanine 108–isoleucine 128 threads the bilayer.

This sequence belongs to the cytochrome b5 family.

Its subcellular location is the endoplasmic reticulum membrane. The protein resides in the microsome membrane. Functionally, membrane bound hemoprotein which function as an electron carrier for several membrane bound oxygenases. The protein is Cytochrome b5 of Oryza sativa subsp. japonica (Rice).